A 207-amino-acid chain; its full sequence is Interleukin-6 (207 aa).

The signal sequence occupies residues 1–20 (MNSLSTSAFSLGLLLVMATA). An intrachain disulfide couples C67 to C73. Phosphoserine is present on S76. The cysteines at positions 96 and 106 are disulfide-linked.

The protein belongs to the IL-6 superfamily. As to quaternary structure, component of a hexamer of two molecules each of IL6, IL6R and IL6ST; first binds to IL6R to associate with the signaling subunit IL6ST. Interacts with IL6R (via the N-terminal ectodomain); this interaction may be affected by IL6R-binding with SORL1, hence decreasing IL6 cis signaling. Interacts with SORL1 (via the N-terminal ectodomain); this interaction leads to IL6 internalization and lysosomal degradation. May form a trimeric complex with the soluble SORL1 ectodomain and soluble IL6R receptor; this interaction might stabilize circulating IL6, hence promoting IL6 trans signaling.

It is found in the secreted. In terms of biological role, cytokine with a wide variety of biological functions in immunity, tissue regeneration, and metabolism. Binds to IL6R, then the complex associates to the signaling subunit IL6ST/gp130 to trigger the intracellular IL6-signaling pathway. The interaction with the membrane-bound IL6R and IL6ST stimulates 'classic signaling', whereas the binding of IL6 and soluble IL6R to IL6ST stimulates 'trans-signaling'. Alternatively, 'cluster signaling' occurs when membrane-bound IL6:IL6R complexes on transmitter cells activate IL6ST receptors on neighboring receiver cells. Its function is as follows. IL6 is a potent inducer of the acute phase response. Rapid production of IL6 contributes to host defense during infection and tissue injury, but excessive IL6 synthesis is involved in disease pathology. In the innate immune response, is synthesized by myeloid cells, such as macrophages and dendritic cells, upon recognition of pathogens through toll-like receptors (TLRs) at the site of infection or tissue injury. In the adaptive immune response, is required for the differentiation of B cells into immunoglobulin-secreting cells. Plays a major role in the differentiation of CD4(+) T cell subsets. Essential factor for the development of T follicular helper (Tfh) cells that are required for the induction of germinal-center formation. Required to drive naive CD4(+) T cells to the Th17 lineage. Also required for proliferation of myeloma cells and the survival of plasmablast cells. Functionally, acts as an essential factor in bone homeostasis and on vessels directly or indirectly by induction of VEGF, resulting in increased angiogenesis activity and vascular permeability. Induces, through 'trans-signaling' and synergistically with IL1B and TNF, the production of VEGF. Involved in metabolic controls, is discharged into the bloodstream after muscle contraction increasing lipolysis and improving insulin resistance. 'Trans-signaling' in central nervous system also regulates energy and glucose homeostasis. Mediates, through GLP-1, crosstalk between insulin-sensitive tissues, intestinal L cells and pancreatic islets to adapt to changes in insulin demand. Also acts as a myokine. Plays a protective role during liver injury, being required for maintenance of tissue regeneration. Also has a pivotal role in iron metabolism by regulating HAMP/hepcidin expression upon inflammation or bacterial infection. Through activation of IL6ST-YAP-NOTCH pathway, induces inflammation-induced epithelial regeneration. The chain is Interleukin-6 (IL6) from Canis lupus familiaris (Dog).